Here is a 113-residue protein sequence, read N- to C-terminus: Small ribosomal subunit protein bS6 (113 aa).

This sequence belongs to the bacterial ribosomal protein bS6 family.

Binds together with bS18 to 16S ribosomal RNA. The polypeptide is Small ribosomal subunit protein bS6 (Vesicomyosocius okutanii subsp. Calyptogena okutanii (strain HA)).